Here is a 529-residue protein sequence, read N- to C-terminus: Glucose transporter 2A (529 aa).

The disordered stretch occupies residues 1–22; that stretch reads MTERRDNVSHAPDAIEGPNDGA. The Cytoplasmic segment spans residues 1–43; that stretch reads MTERRDNVSHAPDAIEGPNDGAHAEDTSPGFFSFENLGVAQVQ. Residues 44–64 form a helical membrane-spanning segment; sequence VVGGTLNGFSIGFVAVYILLY. Over 65 to 119 the chain is Extracellular; that stretch reads EVATNCSLFKTTEACKAVGSYGCEWKDTEVCSWKKECDSDSDGVNPCESLIGYSS. The chain crosses the membrane as a helical span at residues 120–140; it reads LYSGIFASAMIVGSMVGSIIA. The Cytoplasmic segment spans residues 141-152; it reads GKCITMFGLKKS. The chain crosses the membrane as a helical span at residues 153–173; it reads FIIVGVMSVVASALNHISVAT. The Extracellular segment spans residues 174 to 175; that stretch reads NE. The helical transmembrane segment at 176-196 threads the bilayer; it reads FWVLCAGRVLMGIGLGVVCVI. Residues 197-214 lie on the Cytoplasmic side of the membrane; it reads CPMYVNENAHPKLSKVDG. Residues 215 to 235 form a helical membrane-spanning segment; it reads VLFQVFITFGIMLAAMLGLIL. The Extracellular portion of the chain corresponds to 236–250; sequence DKTVNYDNDPDMAGR. Residues 251–271 form a helical membrane-spanning segment; that stretch reads FHGFCAVSSVLSVAMFLVGMF. Residues 272 to 300 lie on the Cytoplasmic side of the membrane; it reads LRESTATFSQDDDGKADGGMDPNEYGWGQ. The helical transmembrane segment at 301 to 321 threads the bilayer; it reads MLWPLFMGAVTAGTLQLTGIN. Residues 322 to 339 lie on the Extracellular side of the membrane; that stretch reads AVMNYAPKITENLGMDPS. Residues 340–360 form a helical membrane-spanning segment; the sequence is LGNFLVMAWNFVTSLVAIPLA. Over 361–368 the chain is Cytoplasmic; the sequence is SRFTMRQM. The chain crosses the membrane as a helical span at residues 369–389; the sequence is FITCSFVASCMCLFLCGIPVF. Residues 390-404 are Extracellular-facing; sequence PGVAEEKVKNGVATT. Residues 405-425 form a helical membrane-spanning segment; sequence GIALFIAAFEFGVGSCFFVLA. At 426–439 the chain is on the cytoplasmic side; the sequence is QDLFPPSFRPKGSS. The chain crosses the membrane as a helical span at residues 440-460; sequence FVVMMQFIFNILINLLYPITT. At 461 to 476 the chain is on the extracellular side; it reads EAISGGATGDQDKGQA. A helical membrane pass occupies residues 477–497; sequence VVFILFGLIGLICFVLQFFYL. At 498-529 the chain is on the cytoplasmic side; the sequence is YPYDANQDHENDHGTEPVERILSPVDVPTPRN. Positions 508 to 529 are disordered; that stretch reads NDHGTEPVERILSPVDVPTPRN.

It belongs to the major facilitator superfamily. Sugar transporter (TC 2.A.1.1) family.

The protein resides in the membrane. Facilitative glucose transporter. In Trypanosoma brucei brucei, this protein is Glucose transporter 2A (THT2A).